The sequence spans 77 residues: ATP synthase subunit 9, mitochondrial (77 aa).

Helical transmembrane passes span 8–28 (MGAG…GNVL) and 45–72 (LFGY…LISF).

It belongs to the ATPase C chain family. As to quaternary structure, F-type ATPases have 2 components, CF(1) - the catalytic core - and CF(0) - the membrane proton channel. CF(1) has five subunits: alpha(3), beta(3), gamma(1), delta(1), epsilon(1). CF(0) has three main subunits: a, b and c.

The protein resides in the mitochondrion membrane. This protein is one of the chains of the nonenzymatic membrane component (F0) of mitochondrial ATPase. The sequence is that of ATP synthase subunit 9, mitochondrial (ATP9) from Petunia sp. (Petunia).